Here is a 64-residue protein sequence, read N- to C-terminus: Large ribosomal subunit protein bL33 (64 aa).

It belongs to the bacterial ribosomal protein bL33 family.

The chain is Large ribosomal subunit protein bL33 from Rippkaea orientalis (strain PCC 8801 / RF-1) (Cyanothece sp. (strain PCC 8801)).